Here is a 238-residue protein sequence, read N- to C-terminus: Probable rhamnogalacturonate lyase B (238 aa).

A signal peptide spans 1-19 (MRLRTSLGVASACASVASA). Residues N27, N110, and N143 are each glycosylated (N-linked (GlcNAc...) asparagine).

Belongs to the polysaccharide lyase 4 family.

The protein localises to the secreted. It carries out the reaction Endotype eliminative cleavage of L-alpha-rhamnopyranosyl-(1-&gt;4)-alpha-D-galactopyranosyluronic acid bonds of rhamnogalacturonan I domains in ramified hairy regions of pectin leaving L-rhamnopyranose at the reducing end and 4-deoxy-4,5-unsaturated D-galactopyranosyluronic acid at the non-reducing end.. In terms of biological role, pectinolytic enzymes consist of four classes of enzymes: pectin lyase, polygalacturonase, pectin methylesterase and rhamnogalacturonase. Degrades the rhamnogalacturonan I (RG-I) backbone of pectin. The protein is Probable rhamnogalacturonate lyase B (rglB) of Aspergillus oryzae (strain ATCC 42149 / RIB 40) (Yellow koji mold).